Reading from the N-terminus, the 175-residue chain is uncharacterized protein (175 aa).

The N-terminal 11 residues, 1-11 (METWRKGSFRN), are a transit peptide targeting the mitochondrion. The interval 29–48 (QGSILSQASTAGGDHEEYSN) is disordered.

It localises to the mitochondrion. This is an uncharacterized protein from Mus musculus (Mouse).